The chain runs to 91 residues: Gem-associated protein 7 homolog (91 aa).

One can recognise a Sm domain in the interval 18–86; sequence LKFYQKMASA…VVGIEYNLVQ (69 aa).

The protein belongs to the gemin-7 family. Part of the core SMN complex at least composed of smn1, yip11/gem2, gem6, gem7 and gem8. Interacts with gem6; the interaction is direct. Interacts with gem8; the interaction is direct.

In Schizosaccharomyces pombe (strain 972 / ATCC 24843) (Fission yeast), this protein is Gem-associated protein 7 homolog.